Consider the following 108-residue polypeptide: Insulin (108 aa).

Positions 1–24 (MALWMHLLPLLALLALWGPEPAPA) are cleaved as a signal peptide. Intrachain disulfides connect cysteine 31–cysteine 94, cysteine 43–cysteine 107, and cysteine 93–cysteine 98. A propeptide spans 57–85 (EAEDLQVGQVELGGGSITGSLPPLEGPMQ) (c peptide).

It belongs to the insulin family. As to quaternary structure, heterodimer of a B chain and an A chain linked by two disulfide bonds.

It localises to the secreted. Functionally, insulin decreases blood glucose concentration. It increases cell permeability to monosaccharides, amino acids and fatty acids. It accelerates glycolysis, the pentose phosphate cycle, and glycogen synthesis in liver. This Aotus trivirgatus (Three-striped night monkey) protein is Insulin (INS).